The following is a 199-amino-acid chain: N-(5'-phosphoribosyl)anthranilate isomerase (199 aa).

This sequence belongs to the TrpF family.

It carries out the reaction N-(5-phospho-beta-D-ribosyl)anthranilate = 1-(2-carboxyphenylamino)-1-deoxy-D-ribulose 5-phosphate. Its pathway is amino-acid biosynthesis; L-tryptophan biosynthesis; L-tryptophan from chorismate: step 3/5. This is N-(5'-phosphoribosyl)anthranilate isomerase from Streptococcus pneumoniae (strain Taiwan19F-14).